The primary structure comprises 788 residues: Histidine--tRNA ligase, cytoplasmic (788 aa).

The disordered stretch occupies residues 252–286 (PQACEENEAGSSTENPHASGEKPKGDKKSKKKKTL).

It belongs to the class-II aminoacyl-tRNA synthetase family. Homodimer.

It catalyses the reaction tRNA(His) + L-histidine + ATP = L-histidyl-tRNA(His) + AMP + diphosphate + H(+). In Oryza sativa subsp. japonica (Rice), this protein is Histidine--tRNA ligase, cytoplasmic.